Here is a 392-residue protein sequence, read N- to C-terminus: Casein kinase II subunit alpha (392 aa).

The 286-residue stretch at 39–324 (YQLVRKLGRG…AREAMDHPYF (286 aa)) folds into the Protein kinase domain. ATP is bound by residues 45–53 (LGRGKYSEV) and Lys-68. Catalysis depends on Asp-156, which acts as the Proton acceptor. Residues 334–355 (MGGSNMPSGSSTPVSSASMMSG) are disordered. A compositionally biased stretch (low complexity) spans 337–354 (SNMPSGSSTPVSSASMMS).

This sequence belongs to the protein kinase superfamily. Ser/Thr protein kinase family. CK2 subfamily. In terms of assembly, tetramer composed of an alpha chain, an alpha' and two beta chains.

It is found in the nucleus. It catalyses the reaction L-seryl-[protein] + ATP = O-phospho-L-seryl-[protein] + ADP + H(+). The enzyme catalyses L-threonyl-[protein] + ATP = O-phospho-L-threonyl-[protein] + ADP + H(+). In terms of biological role, catalytic subunit of a constitutively active serine/threonine-protein kinase complex that phosphorylates a large number of substrates containing acidic residues C-terminal to the phosphorylated serine or threonine. Regulates numerous cellular processes, such as cell cycle progression, apoptosis and transcription, as well as viral infection. May act as a regulatory node which integrates and coordinates numerous signals leading to an appropriate cellular response. During mitosis, functions as a component of the p53/TP53-dependent spindle assembly checkpoint (SAC) that maintains cyclin-B-CDK1 activity and G2 arrest in response to spindle damage. Can also negatively regulate apoptosis. Phosphorylates the caspases CASP9 and CASP2 and the apoptotic regulator NOL3. Phosphorylation protects CASP9 from cleavage and activation by CASP8, and inhibits the dimerization of CASP2 and activation of CASP8. Plays an important role in the circadian clock function by phosphorylating BMAL1. This chain is Casein kinase II subunit alpha (csnk2a1), found in Xenopus laevis (African clawed frog).